Consider the following 124-residue polypeptide: Small ribosomal subunit protein uS12 (124 aa).

At aspartate 89 the chain carries 3-methylthioaspartic acid.

Belongs to the universal ribosomal protein uS12 family. Part of the 30S ribosomal subunit. Contacts proteins S8 and S17. May interact with IF1 in the 30S initiation complex.

In terms of biological role, with S4 and S5 plays an important role in translational accuracy. Interacts with and stabilizes bases of the 16S rRNA that are involved in tRNA selection in the A site and with the mRNA backbone. Located at the interface of the 30S and 50S subunits, it traverses the body of the 30S subunit contacting proteins on the other side and probably holding the rRNA structure together. The combined cluster of proteins S8, S12 and S17 appears to hold together the shoulder and platform of the 30S subunit. This chain is Small ribosomal subunit protein uS12, found in Psychrobacter arcticus (strain DSM 17307 / VKM B-2377 / 273-4).